The sequence spans 309 residues: CDK-activating kinase assembly factor MAT1 (309 aa).

The segment at 6–50 (CPRCKTTKYRNPSLKLMVNVCGHTLCESCVELLFVRGSGSCQECD) adopts an RING-type zinc-finger fold. The UIM domain maps to 142–161 (REQEELEEALEMEKHENEQR).

As to quaternary structure, associates with CDK7 and cyclin H.

Its subcellular location is the nucleus. In terms of biological role, stabilizes the cyclin H-CDK7 complex to form a functional CDK-activating kinase (CAK) enzymatic complex. This chain is CDK-activating kinase assembly factor MAT1 (mnat1), found in Xenopus laevis (African clawed frog).